The sequence spans 420 residues: LanC-like protein 3 homolog (420 aa).

It belongs to the LanC-like protein family.

The chain is LanC-like protein 3 homolog from Drosophila pseudoobscura pseudoobscura (Fruit fly).